Reading from the N-terminus, the 171-residue chain is Ribosome-binding factor A (171 aa).

Residues 126-138 (VREGAKHAGDADP) are compositionally biased toward basic and acidic residues. Residues 126-171 (VREGAKHAGDADPYRVSGVEEEAGGSGEVQAEFDAEDTGDRNRQDD) are disordered.

The protein belongs to the RbfA family. Monomer. Binds 30S ribosomal subunits, but not 50S ribosomal subunits or 70S ribosomes.

Its subcellular location is the cytoplasm. Its function is as follows. One of several proteins that assist in the late maturation steps of the functional core of the 30S ribosomal subunit. Associates with free 30S ribosomal subunits (but not with 30S subunits that are part of 70S ribosomes or polysomes). Required for efficient processing of 16S rRNA. May interact with the 5'-terminal helix region of 16S rRNA. This Mycobacterium sp. (strain JLS) protein is Ribosome-binding factor A.